A 456-amino-acid chain; its full sequence is NADH-quinone oxidoreductase subunit N (456 aa).

14 consecutive transmembrane segments (helical) span residues 6–26, 45–65, 75–95, 97–117, 118–138, 151–171, 181–201, 220–240, 252–272, 281–301, 308–328, 355–375, 382–402, and 426–446; these read LFAL…MLLA, VAAL…GALF, TAYA…AGVA, EAPA…GAGH, AATL…LFAF, FLVM…LIYA, WVGH…GLAF, PAGA…IAIL, LWSA…NVLA, MLGY…ASGA, VLFY…ASAM, GLLS…LYLF, ESWI…YYYI, and LLLI…LVLI.

Belongs to the complex I subunit 2 family. As to quaternary structure, NDH-1 is composed of 14 different subunits. Subunits NuoA, H, J, K, L, M, N constitute the membrane sector of the complex.

It localises to the cell inner membrane. It catalyses the reaction a quinone + NADH + 5 H(+)(in) = a quinol + NAD(+) + 4 H(+)(out). In terms of biological role, NDH-1 shuttles electrons from NADH, via FMN and iron-sulfur (Fe-S) centers, to quinones in the respiratory chain. The immediate electron acceptor for the enzyme in this species is believed to be ubiquinone. Couples the redox reaction to proton translocation (for every two electrons transferred, four hydrogen ions are translocated across the cytoplasmic membrane), and thus conserves the redox energy in a proton gradient. The protein is NADH-quinone oxidoreductase subunit N of Rhodopseudomonas palustris (strain BisA53).